A 363-amino-acid polypeptide reads, in one-letter code: Glutamate 5-kinase (363 aa).

K3 contacts ATP. S43, D128, and N140 together coordinate substrate. Residues 160-161 (TD) and 202-208 (TGGMRTK) each bind ATP. Positions 267–349 (AGAILIDDGA…REIENVLGYS (83 aa)) constitute a PUA domain.

The protein belongs to the glutamate 5-kinase family.

The protein resides in the cytoplasm. The enzyme catalyses L-glutamate + ATP = L-glutamyl 5-phosphate + ADP. The protein operates within amino-acid biosynthesis; L-proline biosynthesis; L-glutamate 5-semialdehyde from L-glutamate: step 1/2. Its function is as follows. Catalyzes the transfer of a phosphate group to glutamate to form L-glutamate 5-phosphate. The protein is Glutamate 5-kinase of Xanthomonas axonopodis pv. citri (strain 306).